A 256-amino-acid chain; its full sequence is Chloroplastic group IIB intron splicing facilitator CRS2, chloroplastic (256 aa).

A chloroplast-targeting transit peptide spans 1–45; that stretch reads MSLLAAAIPSTSSHFSAPFLPSFRMPRKSLTAPLHRIRRPRPFTV. TRNA is bound at residue Y74. The active-site Proton acceptor is the H79. 3 residues coordinate tRNA: Y124, N126, and N172.

The protein belongs to the PTH family. CRS2 subfamily. In terms of assembly, interacts with CAF1 and CAF2. Part of large ribonucleo-protein complexes that include group IIB introns and either CAF1 or CAF2.

The protein localises to the plastid. It localises to the chloroplast stroma. Required for the splicing of group IIB introns in chloroplasts. Forms complexes with either CAF1 or CAF2 which, in turn, interact with RNA and confer intron specificity of the splicing particles. Has no peptidyl-tRNA hydrolase activity. The protein is Chloroplastic group IIB intron splicing facilitator CRS2, chloroplastic (CRS2) of Zea mays (Maize).